We begin with the raw amino-acid sequence, 655 residues long: Epithelial sodium channel subunit alpha (655 aa).

Topologically, residues 1–55 are cytoplasmic; it reads MTDKEEEAEGGKKKEPMIGFYDSYQELFEFFCNNTTIHGTIRMVCSKHNNMKTVS. A helical membrane pass occupies residues 56 to 76; that stretch reads WTILFITTFGVMYWQFGLLLG. The Extracellular segment spans residues 77-531; sequence QYYSYPVSIT…SQWSLWFGSS (455 aa). Intrachain disulfides connect cysteine 102/cysteine 275, cysteine 199/cysteine 206, cysteine 252/cysteine 259, cysteine 364/cysteine 448, cysteine 385/cysteine 425, cysteine 385/cysteine 444, cysteine 389/cysteine 440, cysteine 398/cysteine 425, cysteine 398/cysteine 448, and cysteine 400/cysteine 414. The chain crosses the membrane as a helical span at residues 532 to 552; that stretch reads VLSVVEMGELVFDLIAVGVIV. The Cytoplasmic portion of the chain corresponds to 553-655; sequence LRRRRREKCQ…QEASEGPTVL (103 aa). The disordered stretch occupies residues 561–587; the sequence is CQASSDGEGTSDSTAGTHRGQENASRS. Polar residues predominate over residues 562–586; it reads QASSDGEGTSDSTAGTHRGQENASR.

Belongs to the amiloride-sensitive sodium channel (TC 1.A.6) family. SCNN1A subfamily. In terms of assembly, heterotrimer; containing an alpha/SCNN1A, a beta/SCNN1B and a gamma/SCNN1G subunit. Strongly expressed in gill, kidney and rectum (at protein level). More weakly expressed in muscle, brain, heart, liver and intestine.

It localises to the apical cell membrane. The protein resides in the cell projection. The protein localises to the cilium. It is found in the cytoplasmic granule. Its subcellular location is the cytoplasm. It localises to the cytoplasmic vesicle. The protein resides in the secretory vesicle. The protein localises to the acrosome. It is found in the flagellum. The catalysed reaction is Na(+)(in) = Na(+)(out). With respect to regulation, originally identified and characterized by its inhibition by the diuretic drug amiloride. Functionally, this is one of the three pore-forming subunits of the heterotrimeric epithelial sodium channel (ENaC), a critical regulator of sodium balance and fluid homeostasis. ENaC operates in epithelial tissues, where it mediates the electrodiffusion of sodium ions from extracellular fluid through the apical membrane of cells, with water following osmotically. The polypeptide is Epithelial sodium channel subunit alpha (scnn1a) (Neoceratodus forsteri (Australian lungfish)).